We begin with the raw amino-acid sequence, 394 residues long: Lipid-A-disaccharide synthase (394 aa).

The protein belongs to the LpxB family.

It carries out the reaction 2-N,3-O-bis[(3R)-3-hydroxytetradecanoyl]-alpha-D-glucosaminyl 1-phosphate + UDP-2-N,3-O-bis[(3R)-3-hydroxytetradecanoyl]-alpha-D-glucosamine = lipid A disaccharide (E. coli) + UDP + H(+). It catalyses the reaction a lipid X + a UDP-2-N,3-O-bis[(3R)-3-hydroxyacyl]-alpha-D-glucosamine = a lipid A disaccharide + UDP + H(+). The protein operates within glycolipid biosynthesis; lipid IV(A) biosynthesis; lipid IV(A) from (3R)-3-hydroxytetradecanoyl-[acyl-carrier-protein] and UDP-N-acetyl-alpha-D-glucosamine: step 5/6. In terms of biological role, condensation of UDP-2,3-diacylglucosamine and 2,3-diacylglucosamine-1-phosphate to form lipid A disaccharide, a precursor of lipid A, a phosphorylated glycolipid that anchors the lipopolysaccharide to the outer membrane of the cell. The sequence is that of Lipid-A-disaccharide synthase from Yersinia pestis.